The chain runs to 479 residues: Ribosomal RNA small subunit methyltransferase F (479 aa).

S-adenosyl-L-methionine is bound by residues 125–131 (AAAPGSK), E149, D176, and D194. The Nucleophile role is filled by C247.

The protein belongs to the class I-like SAM-binding methyltransferase superfamily. RsmB/NOP family.

It localises to the cytoplasm. It carries out the reaction cytidine(1407) in 16S rRNA + S-adenosyl-L-methionine = 5-methylcytidine(1407) in 16S rRNA + S-adenosyl-L-homocysteine + H(+). Its function is as follows. Specifically methylates the cytosine at position 1407 (m5C1407) of 16S rRNA. This Salmonella paratyphi B (strain ATCC BAA-1250 / SPB7) protein is Ribosomal RNA small subunit methyltransferase F.